The sequence spans 188 residues: Putative manganese efflux pump MntP (188 aa).

The next 6 membrane-spanning stretches (helical) occupy residues Leu-3–Gly-23, Leu-41–Ala-61, Ser-62–Gly-82, Leu-107–Leu-129, Ala-143–Gly-163, and Ile-168–Gly-188.

This sequence belongs to the MntP (TC 9.B.29) family.

It is found in the cell inner membrane. Probably functions as a manganese efflux pump. This is Putative manganese efflux pump MntP from Klebsiella pneumoniae (strain 342).